We begin with the raw amino-acid sequence, 509 residues long: MISSKATSAARACARTSRVMQQQQRRLLATVVSSSSLFPGEPSSPHVVTSQIPGPKSKELSDRIGTFQENRTHGFVVDYAKSQGNWIADADGNVLLDMFAQIASIAIGYNNPDLLALAKTDEFITATMNRAALGSFPPTNWQELVETSFGTVKPDGLNNIFTAMCGSCANENAFKASFMAYRARERGEKAEFTPEEMSSCMKNQSPGSPDLSILSFTSAFHGRLFGSLSATRSKAIHKLDIPSFNWPVVEWPDVKYPFAQNSRENAEAEKVALAAVEEAIVSSKKTGSSYGPVAALIVEPIQSEGGDNHASPAFFQGLRDVTKKHGVFMIVDEVQTGVGATGAFWAHSKWNLTSPPDFVTFSKKMQAAGFYHNIETRPSLPYRNYNTWMGDPARTLQARQIIRTIQDHNLIQKTDKVGNYIYEKLFDLIENGAGRGKIEKLRGENAGTFLAFDGRTAKVRDQLIMEMRKLGVHMGGCGDKALRLRPMLVFEQKHADIFLDKLETALGQL.

Residue 166–167 (GS) coordinates pyridoxal 5'-phosphate. Arg-223 is a binding site for substrate. Position 363 is an N6-(pyridoxal phosphate)lysine (Lys-363). Position 387 (Thr-387) interacts with pyridoxal 5'-phosphate.

Belongs to the class-III pyridoxal-phosphate-dependent aminotransferase family. As to quaternary structure, homodimer. The cofactor is pyridoxal 5'-phosphate.

The protein localises to the cytoplasm. It catalyses the reaction 4-aminobutanoate + 2-oxoglutarate = succinate semialdehyde + L-glutamate. Functionally, deaminates gamma-aminobutyric acid (GABA) to succinate-semialdehyde, which in turn is converted to succinate by the succinate semialdehyde dehydrogenase. Not required for the utilization of GABA as nitrogen source. This chain is 4-aminobutyrate aminotransferase (GATA), found in Mycosarcoma maydis (Corn smut fungus).